A 154-amino-acid chain; its full sequence is Large ribosomal subunit protein uL30 (154 aa).

The interval 114 to 139 is disordered; it reads PVLRLHPPRGGHRGQKHPTAEGGQIG. The segment covering 119-129 has biased composition (basic residues); the sequence is HPPRGGHRGQK.

Belongs to the universal ribosomal protein uL30 family. As to quaternary structure, part of the 50S ribosomal subunit.

The sequence is that of Large ribosomal subunit protein uL30 from Haloquadratum walsbyi (strain DSM 16790 / HBSQ001).